Reading from the N-terminus, the 251-residue chain is Octanoyltransferase (251 aa).

Residues 56–241 (AETPDEIWIV…NLDGASAAAD (186 aa)) enclose the BPL/LPL catalytic domain. Residues 96–103 (RGGQITYH), 168–170 (ALG), and 181–183 (GLS) each bind substrate. Residue C199 is the Acyl-thioester intermediate of the active site.

Belongs to the LipB family.

The protein localises to the cytoplasm. It catalyses the reaction octanoyl-[ACP] + L-lysyl-[protein] = N(6)-octanoyl-L-lysyl-[protein] + holo-[ACP] + H(+). It participates in protein modification; protein lipoylation via endogenous pathway; protein N(6)-(lipoyl)lysine from octanoyl-[acyl-carrier-protein]: step 1/2. In terms of biological role, catalyzes the transfer of endogenously produced octanoic acid from octanoyl-acyl-carrier-protein onto the lipoyl domains of lipoate-dependent enzymes. Lipoyl-ACP can also act as a substrate although octanoyl-ACP is likely to be the physiological substrate. This is Octanoyltransferase from Burkholderia vietnamiensis (strain G4 / LMG 22486) (Burkholderia cepacia (strain R1808)).